We begin with the raw amino-acid sequence, 414 residues long: Lysosome-associated membrane glycoprotein 1 (414 aa).

The N-terminal stretch at 1–18 (MGGAARAVLLGFLQASSS) is a signal peptide. The segment at 19-181 (FDVRDSTGKV…SANKTECRED (163 aa)) is first lumenal domain. The Lumenal segment spans residues 19–379 (FDVRDSTGKV…EECQLDENNM (361 aa)). A disulfide bridge links Cys-29 with Cys-67. 10 N-linked (GlcNAc...) asparagine glycosylation sites follow: Asn-33, Asn-58, Asn-71, Asn-90, Asn-108, Asn-117, Asn-154, Asn-159, Asn-168, and Asn-174. The cysteines at positions 142 and 178 are disulfide-linked. The tract at residues 182-224 (MVSTTTVAPTTPKHATSQVPTTSPAPTAAPSSPAVGKYNVTGA) is hinge. The segment at 186-213 (TTVAPTTPKHATSQVPTTSPAPTAAPSS) is disordered. Over residues 196 to 213 (ATSQVPTTSPAPTAAPSS) the composition is skewed to low complexity. N-linked (GlcNAc...) asparagine glycosylation is found at Asn-220, Asn-225, Asn-238, Asn-259, Asn-289, Asn-301, and Asn-319. The segment at 225–379 (NGTCVLASMG…EECQLDENNM (155 aa)) is second lumenal domain. Cys-228 and Cys-266 are joined by a disulfide. A disulfide bond links Cys-335 and Cys-372. Residues 380–403 (LIPIIVGAALAGLVLIVLIAYLIG) traverse the membrane as a helical segment. The Cytoplasmic portion of the chain corresponds to 404 to 414 (RKRSHAGYQTI).

It belongs to the LAMP family.

It is found in the lysosome membrane. The protein resides in the endosome membrane. Its subcellular location is the late endosome membrane. The protein localises to the cell membrane. It localises to the cytolytic granule membrane. Functionally, lysosomal membrane glycoprotein which plays an important role in lysosome biogenesis, lysosomal pH regulation, autophagy and cholesterol homeostasis. In terms of biological role, (Microbial infection) Plays an essential role in efficient replication and spread of Marek's disease virus, by facilitating viral cell-to-cell spread. This Gallus gallus (Chicken) protein is Lysosome-associated membrane glycoprotein 1 (LAMP1).